Here is a 715-residue protein sequence, read N- to C-terminus: Lactococcin transport/processing ATP-binding protein LcnC-like (715 aa).

Positions 11–138 constitute a Peptidase C39 domain; the sequence is QVDEMDCGCA…SEWTGISLFL (128 aa). Residue C17 is part of the active site. The next 5 helical transmembrane spans lie at 167-187, 197-217, 237-257, 282-302, and 307-327; these read VILN…LGSY, IPNA…LTYI, LAID…MSFF, TILS…ILGL, and LFLL…IFTP. The region spanning 168–450 is the ABC transmembrane type-1 domain; that stretch reads ILNIVIASFI…IINLQTKLQK (283 aa). Residues 482 to 715 form the ABC transporter domain; that stretch reads LNMSEISYQY…NGFYAQLYHN (234 aa). 515 to 522 serves as a coordination point for ATP; the sequence is GISGSGKS.

Belongs to the ABC transporter superfamily. HlyB family.

The protein localises to the cell membrane. Functionally, involved in the export process of a bacteriocin lactococcin. This Lactococcus lactis subsp. lactis (strain IL1403) (Streptococcus lactis) protein is Lactococcin transport/processing ATP-binding protein LcnC-like (lcnC).